Consider the following 372-residue polypeptide: GPN-loop GTPase 1 (372 aa).

Alanine 2 carries the post-translational modification N-acetylalanine. 29–34 (GSGKTT) contacts GTP. The short motif at 86–88 (GPN) is the Gly-Pro-Asn (GPN)-loop; involved in dimer interface element. 189–192 (NKTD) contributes to the GTP binding site. A phosphoserine mark is found at serine 301 and serine 314. The interval 303–372 (ALDPEAGKGN…ESMAHWKRNK (70 aa)) is disordered. Position 328 is a phosphothreonine (threonine 328). Residues 330–342 (DEEDEEADSDTDD) are compositionally biased toward acidic residues. The residue at position 338 (serine 338) is a Phosphoserine. Threonine 340 carries the post-translational modification Phosphothreonine. Basic and acidic residues predominate over residues 343 to 355 (IDHRVTEESREEP).

The protein belongs to the GPN-loop GTPase family. Heterodimer with GPN3. Binds to RNA polymerase II (RNAPII). Interacts directly with RNAPII subunits RPB4 and RPB7 and the CTD of RPB1. Interacts with XPA.

Its subcellular location is the cytoplasm. It is found in the nucleus. Functionally, small GTPase required for proper nuclear import of RNA polymerase II (RNAPII). May act at an RNAP assembly step prior to nuclear import. Forms an interface between the RNA polymerase II enzyme and chaperone/scaffolding proteins, suggesting that it is required to connect RNA polymerase II to regulators of protein complex formation. May be involved in nuclear localization of XPA. This chain is GPN-loop GTPase 1, found in Mus musculus (Mouse).